A 122-amino-acid chain; its full sequence is Biogenesis of lysosome-related organelles complex 1 subunit BLS1 (122 aa).

Residue Ser-33 is modified to Phosphoserine.

The protein belongs to the BLOC1S1 family. As to quaternary structure, component of the biogenesis of lysosome-related organelles complex-1 (BLOC-1) composed of at least BLI1, BLS1, CNL1, KXD1, SNN1 and VAB2.

Its subcellular location is the endosome. Its function is as follows. Component of the biogenesis of lysosome-related organelles complex-1 (BLOC-1), a complex involved in endosomal cargo sorting. This chain is Biogenesis of lysosome-related organelles complex 1 subunit BLS1 (BLS1), found in Saccharomyces cerevisiae (strain RM11-1a) (Baker's yeast).